Reading from the N-terminus, the 729-residue chain is MAKITKEIVFGNHKLILETGEVARQADGAVMASMNGTQVLVTVVWKKDGGESNDFFPLTVNYQEKFYAIGKIPGGFNKREGRPSDNETLISRLIDRPIRPLFPDNFFNEVQIIATVLSLNPEVSPDIIAMIGASAALSISGVPFNGPIGAARVGYKDGVYLLNPSRKEQEESKLDLVIAGTKDAILMVESEAQELSEDIMRGAMLYGHEMMKNVIKSIEELARDVGKSKPEWKAPEIDTVLKARINDVARNEVEAAYLIKDKQQRYQRLDELREQTISALLAENDELNADVIANMFGELERSIVRNRILDGEPRIDGRDHRTVRPISIRTKFLERTHGSCLFTRGETQAIVVATLGNERDAQILDGISGESRDRFMLHYNFPPYSVGETGQVGSPKRREIGHGRLAKRALMAVLPDANEFPYVLRIVSEITESNGSSSMATVCGTSLALMDAGVPLKAPVAGVAMGLIKEGDRYAVLTDILGDEDHLGDMDFKVAGTEKGITALQMDIKISGITNEIMEQALEQALEGRTHILGVMNNALAEHRTELSQHAPRITTMKVAEDKIRTIIGKGGATIKGLIESTGVSIDIDDSGVVQLFSPDKMALEEAQKQIKALIAEIEVGQTYQGKVSKIVDFGAFINLLPGKDGLLHISQICADRTQKVEEVLQEGQEIEVFVAGIDKQGRVKLEWKDKPQAEAKEVEDAPVSATFLTMEEQSEEINSGNKISEEEE.

D485 and D491 together coordinate Mg(2+). The KH domain occupies 552-611 (PRITTMKVAEDKIRTIIGKGGATIKGLIESTGVSIDIDDSGVVQLFSPDKMALEEAQKQI). The S1 motif domain maps to 621 to 689 (GQTYQGKVSK…KQGRVKLEWK (69 aa)).

It belongs to the polyribonucleotide nucleotidyltransferase family. In terms of assembly, component of the RNA degradosome, which is a multiprotein complex involved in RNA processing and mRNA degradation. Mg(2+) serves as cofactor.

It localises to the cytoplasm. It catalyses the reaction RNA(n+1) + phosphate = RNA(n) + a ribonucleoside 5'-diphosphate. Its function is as follows. Involved in mRNA degradation. Catalyzes the phosphorolysis of single-stranded polyribonucleotides processively in the 3'- to 5'-direction. The polypeptide is Polyribonucleotide nucleotidyltransferase (Legionella pneumophila subsp. pneumophila (strain Philadelphia 1 / ATCC 33152 / DSM 7513)).